The chain runs to 657 residues: Probable potassium transport system protein Kup (657 aa).

The tract at residues 1 to 25 is disordered; sequence MGSGPADEEHTVDTEPGVSPPRRTV. The next 12 membrane-spanning stretches (helical) occupy residues 35 to 55, 77 to 97, 127 to 147, 165 to 185, 196 to 216, 234 to 254, 275 to 295, 315 to 335, 365 to 385, 394 to 414, 422 to 442, and 447 to 467; these read VVVG…IYTI, VVSL…VLLV, TAVL…DSMI, PGLE…LFSV, LFGP…VSGI, FFFG…LAVT, WLVL…ALLL, WPMV…VITG, IYVP…VFAF, AFGM…FYIV, LWLV…FLAA, and LVHG…VMTT.

It belongs to the HAK/KUP transporter (TC 2.A.72) family.

The protein localises to the cell membrane. It catalyses the reaction K(+)(in) + H(+)(in) = K(+)(out) + H(+)(out). In terms of biological role, transport of potassium into the cell. Likely operates as a K(+):H(+) symporter. In Rhodococcus jostii (strain RHA1), this protein is Probable potassium transport system protein Kup.